Reading from the N-terminus, the 105-residue chain is MNKIRKGDEVVVLAGKDRGRRGVVLSRVDDERLLVEGVNRVKKHVRPNPLKGEVGGIVEKEMPLHISNVALFNPAAQKGDRVGIRVLEDGRKVRFFKSNGELVDA.

Belongs to the universal ribosomal protein uL24 family. In terms of assembly, part of the 50S ribosomal subunit.

Functionally, one of two assembly initiator proteins, it binds directly to the 5'-end of the 23S rRNA, where it nucleates assembly of the 50S subunit. In terms of biological role, one of the proteins that surrounds the polypeptide exit tunnel on the outside of the subunit. The protein is Large ribosomal subunit protein uL24 of Aromatoleum aromaticum (strain DSM 19018 / LMG 30748 / EbN1) (Azoarcus sp. (strain EbN1)).